The primary structure comprises 209 residues: Transmembrane domain-containing protein TMIGD3 (209 aa).

Positions 1-15 (MEFLLLLSLALFSDA) are cleaved as a signal peptide. Residues 152–172 (SILIICILITSLGIIFIISHL) form a helical membrane-spanning segment. Residues 179–201 (QRNREVTGKSISRNPQASQGPSM) are disordered. The segment covering 187–201 (KSISRNPQASQGPSM) has biased composition (polar residues).

Its subcellular location is the membrane. The chain is Transmembrane domain-containing protein TMIGD3 (Tmigd3) from Mus musculus (Mouse).